Reading from the N-terminus, the 117-residue chain is Large ribosomal subunit protein bL20c (117 aa).

The protein belongs to the bacterial ribosomal protein bL20 family.

The protein localises to the plastid. It is found in the chloroplast. Its function is as follows. Binds directly to 23S ribosomal RNA and is necessary for the in vitro assembly process of the 50S ribosomal subunit. It is not involved in the protein synthesizing functions of that subunit. In Barbarea verna (Land cress), this protein is Large ribosomal subunit protein bL20c.